We begin with the raw amino-acid sequence, 477 residues long: Cysteine--tRNA ligase (477 aa).

Cys34 lines the Zn(2+) pocket. A 'HIGH' region motif is present at residues 36 to 46 (PTVYDFAHIGN). Zn(2+)-binding residues include Cys235, His260, and Glu264. The 'KMSKS' region motif lies at 293–297 (KMSKS). Lys296 contributes to the ATP binding site.

It belongs to the class-I aminoacyl-tRNA synthetase family. In terms of assembly, monomer. Requires Zn(2+) as cofactor.

The protein localises to the cytoplasm. The catalysed reaction is tRNA(Cys) + L-cysteine + ATP = L-cysteinyl-tRNA(Cys) + AMP + diphosphate. This Mesorhizobium japonicum (strain LMG 29417 / CECT 9101 / MAFF 303099) (Mesorhizobium loti (strain MAFF 303099)) protein is Cysteine--tRNA ligase.